Here is a 940-residue protein sequence, read N- to C-terminus: Isoleucine--tRNA ligase (940 aa).

Residues 58-68 (PYANGSIHIGH) carry the 'HIGH' region motif. Glutamate 563 is an L-isoleucyl-5'-AMP binding site. A 'KMSKS' region motif is present at residues 604–608 (KMSKS). An ATP-binding site is contributed by lysine 607. 4 residues coordinate Zn(2+): cysteine 902, cysteine 905, cysteine 922, and cysteine 925.

It belongs to the class-I aminoacyl-tRNA synthetase family. IleS type 1 subfamily. Monomer. Requires Zn(2+) as cofactor.

Its subcellular location is the cytoplasm. The enzyme catalyses tRNA(Ile) + L-isoleucine + ATP = L-isoleucyl-tRNA(Ile) + AMP + diphosphate. Catalyzes the attachment of isoleucine to tRNA(Ile). As IleRS can inadvertently accommodate and process structurally similar amino acids such as valine, to avoid such errors it has two additional distinct tRNA(Ile)-dependent editing activities. One activity is designated as 'pretransfer' editing and involves the hydrolysis of activated Val-AMP. The other activity is designated 'posttransfer' editing and involves deacylation of mischarged Val-tRNA(Ile). This Marinomonas sp. (strain MWYL1) protein is Isoleucine--tRNA ligase.